Reading from the N-terminus, the 421-residue chain is Proton extrusion protein PxcA (421 aa).

Residues 124–153 form a disordered region; it reads PTVHSSNPDDSQLMTSKNNSKPVPDPESDD. Polar residues predominate over residues 125–144; sequence TVHSSNPDDSQLMTSKNNSK. Helical transmembrane passes span 203–223, 298–318, 345–365, and 381–401; these read FVLL…SFIV, AIKN…LLIS, IIIL…WEVI, and FIFL…KYWI.

Belongs to the CemA family.

It localises to the cell inner membrane. Required for H(+) efflux immediately after light irradiation to form a rapid H(+) concentration gradient across the thylakoid membranes. Together with PxcL, contributes to transient H(+) uptake following dark to light transition. In Synechococcus sp. (strain ATCC 27144 / PCC 6301 / SAUG 1402/1) (Anacystis nidulans), this protein is Proton extrusion protein PxcA.